An 84-amino-acid chain; its full sequence is LYR motif-containing protein 4B (84 aa).

It belongs to the complex I LYR family.

In Salmo salar (Atlantic salmon), this protein is LYR motif-containing protein 4B (lyrm4b).